We begin with the raw amino-acid sequence, 84 residues long: RQC P-site tRNA stabilizing factor (84 aa).

Residues 1-64 (MRIDKFLQSV…IEEYTILQIP (64 aa)) form the S4 RNA-binding domain.

It belongs to the RqcP family. In terms of assembly, associates with stalled 50S ribosomal subunits. Binds to RqcH, 23S rRNA and the P-site tRNA. Does not require RqcH for association with 50S subunits.

Key component of the ribosome quality control system (RQC), a ribosome-associated complex that mediates the extraction of incompletely synthesized nascent chains from stalled ribosomes and their subsequent degradation. RqcH recruits Ala-charged tRNA, and with RqcP directs the elongation of stalled nascent chains on 50S ribosomal subunits, leading to non-templated C-terminal alanine extensions (Ala tail). The Ala tail promotes nascent chain degradation. RqcP is associated with the translocation-like movement of the peptidyl-tRNA from the A-site into the P-site. This is RQC P-site tRNA stabilizing factor from Helicobacter pylori (strain ATCC 700392 / 26695) (Campylobacter pylori).